We begin with the raw amino-acid sequence, 234 residues long: Large ribosomal subunit protein uL1 (234 aa).

This sequence belongs to the universal ribosomal protein uL1 family. Part of the 50S ribosomal subunit.

Functionally, binds directly to 23S rRNA. The L1 stalk is quite mobile in the ribosome, and is involved in E site tRNA release. Protein L1 is also a translational repressor protein, it controls the translation of the L11 operon by binding to its mRNA. The chain is Large ribosomal subunit protein uL1 from Psychromonas ingrahamii (strain DSM 17664 / CCUG 51855 / 37).